The primary structure comprises 754 residues: 5-methyltetrahydropteroyltriglutamate--homocysteine methyltransferase (754 aa).

Residues 15 to 18 and lysine 114 each bind 5-methyltetrahydropteroyltri-L-glutamate; that span reads RELK. L-homocysteine contacts are provided by residues 430–432 and glutamate 483; that span reads IGS. L-methionine is bound by residues 430–432 and glutamate 483; that span reads IGS. Residues 514 to 515 and tryptophan 560 each bind 5-methyltetrahydropteroyltri-L-glutamate; that span reads RC. Aspartate 598 is a binding site for L-homocysteine. Position 598 (aspartate 598) interacts with L-methionine. Glutamate 604 serves as a coordination point for 5-methyltetrahydropteroyltri-L-glutamate. Histidine 641, cysteine 643, and glutamate 665 together coordinate Zn(2+). Residue histidine 694 is the Proton donor of the active site. Residue cysteine 726 coordinates Zn(2+).

This sequence belongs to the vitamin-B12 independent methionine synthase family. Requires Zn(2+) as cofactor.

It carries out the reaction 5-methyltetrahydropteroyltri-L-glutamate + L-homocysteine = tetrahydropteroyltri-L-glutamate + L-methionine. The protein operates within amino-acid biosynthesis; L-methionine biosynthesis via de novo pathway; L-methionine from L-homocysteine (MetE route): step 1/1. Functionally, catalyzes the transfer of a methyl group from 5-methyltetrahydrofolate to homocysteine resulting in methionine formation. The sequence is that of 5-methyltetrahydropteroyltriglutamate--homocysteine methyltransferase from Campylobacter jejuni subsp. jejuni serotype O:6 (strain 81116 / NCTC 11828).